Consider the following 237-residue polypeptide: Bax inhibitor 1 (237 aa).

The Cytoplasmic segment spans residues 1-29; it reads MNIFDRKINFDALLKFSHITPSTQQHLKK. Lys7 participates in a covalent cross-link: Glycyl lysine isopeptide (Lys-Gly) (interchain with G-Cter in ubiquitin). A helical membrane pass occupies residues 30–50; the sequence is VYASFALCMFVAAAGAYVHVV. At 51–52 the chain is on the lumenal side; that stretch reads TR. Residues 53 to 73 form a helical membrane-spanning segment; it reads FIQAGLLSALGSLGLMIWLMA. Residues 74-86 are Cytoplasmic-facing; the sequence is TPHSHETEQKRLG. The helical transmembrane segment at 87–107 threads the bilayer; it reads LLAGFAFLTGVGLGPALDLCI. Residues 108 to 112 lie on the Lumenal side of the membrane; sequence AINPS. A helical membrane pass occupies residues 113-133; sequence ILPTAFMGTAMIFTCFTLSAL. At 134–139 the chain is on the cytoplasmic side; that stretch reads YARRRS. The chain crosses the membrane as a helical span at residues 140-160; sequence YLFLGGILMSAMSLMVLSSLG. The Lumenal segment spans residues 161-166; the sequence is NLFFGS. Residues 167-187 form a helical membrane-spanning segment; the sequence is IWLFQANLYVGLVVMCGFVLF. The Cytoplasmic portion of the chain corresponds to 188–206; it reads DTQLIIEKAENGDKDYIWH. Positions 207 to 227 form an intramembrane region, helical; that stretch reads CVDLFSDFVTLFRKLMMILAM. The Cytoplasmic segment spans residues 228–237; it reads NEKDKKKEKK.

Belongs to the BI1 family. Interacts with BCL2 and BCL2L1. Interacts with ERN1. Ubiquitinated by BFAR, leading to proteasomal degradation.

It is found in the endoplasmic reticulum membrane. Endoplasmic reticulum (ER)-resident protein that confers cellular protection as an anti-apoptotic protein by limiting multiple stress-inducing pathways surrounding the endoplasmic reticulum and mitochondria. Inhibits the activities of the key sensor for the endoplasmic reticulum unfolded protein response IRE1alpha/ERN1 both directly and by blocking BAX/BAK binding. Modulates ER calcium homeostasis by acting as a calcium-leak channel. Negatively regulates autophagy and autophagosome formation, especially during periods of nutrient deprivation, and reduces cell survival during starvation. The protein is Bax inhibitor 1 (TMBIM6) of Sus scrofa (Pig).